The primary structure comprises 219 residues: Putative germin-like protein 8-1 (219 aa).

The signal sequence occupies residues 1–23 (MASFISFLLLAALIGMASWQAIA). C33 and C48 are joined by a disulfide. N53 and N79 each carry an N-linked (GlcNAc...) asparagine glycan. A Cupin type-1 domain is found at 63 to 215 (AMLDKPRDTA…AFQVDKKIID (153 aa)). Mn(2+) is bound by residues H112, H114, E119, and H160.

Belongs to the germin family. As to quaternary structure, oligomer (believed to be a pentamer but probably hexamer).

The protein resides in the secreted. Its subcellular location is the extracellular space. The protein localises to the apoplast. Its function is as follows. Plays a role in broad-spectrum disease resistance. Probably has no oxalate oxidase activity even if the active site is conserved. This Oryza sativa subsp. japonica (Rice) protein is Putative germin-like protein 8-1.